Here is a 254-residue protein sequence, read N- to C-terminus: Small ribosomal subunit protein eS1 (254 aa).

Residue A2 is modified to N-acetylalanine; partial.

The protein belongs to the eukaryotic ribosomal protein eS1 family. Component of the small ribosomal subunit. Mature ribosomes consist of a small (40S) and a large (60S) subunit. The 40S subunit contains about 33 different proteins and 1 molecule of RNA (18S). The 60S subunit contains about 49 different proteins and 3 molecules of RNA (25S, 5.8S and 5S).

Its subcellular location is the cytoplasm. This chain is Small ribosomal subunit protein eS1, found in Zygosaccharomyces rouxii (strain ATCC 2623 / CBS 732 / NBRC 1130 / NCYC 568 / NRRL Y-229).